The chain runs to 155 residues: Small ribosomal subunit protein uS7c (155 aa).

Belongs to the universal ribosomal protein uS7 family. Part of the 30S ribosomal subunit.

Its subcellular location is the plastid. The protein resides in the chloroplast. Functionally, one of the primary rRNA binding proteins, it binds directly to 16S rRNA where it nucleates assembly of the head domain of the 30S subunit. This chain is Small ribosomal subunit protein uS7c (rps7), found in Sagittaria latifolia (Broadleaf arrowhead).